A 117-amino-acid polypeptide reads, in one-letter code: UPF0295 protein RBAM_008830 (117 aa).

2 consecutive transmembrane segments (helical) span residues 13–33 and 41–61; these read TFALSLVFVGFIIMYIGLFFK and LFMILGLLSIGLSTAVYFWIG.

Belongs to the UPF0295 family.

It is found in the cell membrane. The chain is UPF0295 protein RBAM_008830 from Bacillus velezensis (strain DSM 23117 / BGSC 10A6 / LMG 26770 / FZB42) (Bacillus amyloliquefaciens subsp. plantarum).